Here is a 236-residue protein sequence, read N- to C-terminus: 2-C-methyl-D-erythritol 4-phosphate cytidylyltransferase (236 aa).

The protein belongs to the IspD/TarI cytidylyltransferase family. IspD subfamily. As to quaternary structure, homodimer.

It carries out the reaction 2-C-methyl-D-erythritol 4-phosphate + CTP + H(+) = 4-CDP-2-C-methyl-D-erythritol + diphosphate. It functions in the pathway isoprenoid biosynthesis; isopentenyl diphosphate biosynthesis via DXP pathway; isopentenyl diphosphate from 1-deoxy-D-xylulose 5-phosphate: step 2/6. Functionally, catalyzes the formation of 4-diphosphocytidyl-2-C-methyl-D-erythritol from CTP and 2-C-methyl-D-erythritol 4-phosphate (MEP). This Escherichia coli O7:K1 (strain IAI39 / ExPEC) protein is 2-C-methyl-D-erythritol 4-phosphate cytidylyltransferase.